The following is a 1534-amino-acid chain: DNA polymerase alpha catalytic subunit (1534 aa).

Residues 1–12 (MDEGSADAGASG) show a composition bias toward low complexity. Disordered regions lie at residues 1-23 (MDEG…SEAV), 96-141 (THRT…LSAA), and 864-905 (FNST…GPSY). Positions 116 to 125 (RKRKQPRPQS) are enriched in basic residues. The segment covering 127 to 141 (RPPQQSAAAASLSAA) has biased composition (low complexity). 2 stretches are compositionally biased toward basic and acidic residues: residues 864–882 (FNST…RPDE) and 889–898 (DEGHHVDQGK). Zn(2+) contacts are provided by C1340, C1343, C1383, C1386, C1422, C1427, C1448, and C1454. A CysA-type zinc finger spans residues 1340–1386 (CPSCSTTFDCPPVSSLIIGSSSGNVSNPNEGNDASINFWRRMRCPRC). Positions 1422 to 1451 (CDDEGCKYSTHSVNLRVMGDSERGTICPNY) match the CysB motif motif.

It belongs to the DNA polymerase type-B family.

The protein resides in the nucleus. It catalyses the reaction DNA(n) + a 2'-deoxyribonucleoside 5'-triphosphate = DNA(n+1) + diphosphate. Polymerase alpha in a complex with DNA primase is a replicative polymerase. This chain is DNA polymerase alpha catalytic subunit, found in Oryza sativa subsp. japonica (Rice).